The following is a 368-amino-acid chain: Seven-bladed beta-propeller protein MSMEG_5308 (368 aa).

In terms of assembly, interacts with MmpL3 and TtfA.

It localises to the cell septum. The protein localises to the cell tip. Functionally, stabilizes the MmpL3/TtfA trehalose monomycolate (TMM) transport complex under stress conditions. This is Seven-bladed beta-propeller protein MSMEG_5308 from Mycolicibacterium smegmatis (strain ATCC 700084 / mc(2)155) (Mycobacterium smegmatis).